The sequence spans 298 residues: CD-NTase-associated protein 6 (298 aa).

Residues glycine 80–alanine 85 and arginine 204–arginine 205 each bind ATP.

It belongs to the AAA ATPase family. In terms of assembly, homohexamer, forms a 1:1:6 CdnC:Cap7:Cap6 complex.

Its function is as follows. Regulates complex assembly in a CBASS antivirus system. CBASS (cyclic oligonucleotide-based antiphage signaling system) provides immunity against bacteriophage. The CD-NTase protein synthesizes cyclic nucleotides in response to infection; these serve as specific second messenger signals. The signals activate a diverse range of effectors, leading to bacterial cell death and thus abortive phage infection. A type III CBASS system. Expression of this CBASS system (Cap18-Cap6-Cap7-CdnC-CapW-Cap17) in a susceptible E.coli (strain MG1655) confers resistance to bacteriophage P1. Binds and disassembles an active CdnC:Cap7 complex, inhibiting the complex's ability to synthesize cyclic nucleotide second messengers. An AAA+-ATPase remodeler, in the absence of foreign threat Cap6 probably maintains the Cap7 protein in its open, inactive state. Once activated (presumably by a bacteriophage protein) Cap7 binds to and activates its cognate CD-NTase (CdnC in this bacteria) to synthesize a cyclic nucleotide second messenger which leads to abortive phage infection. The polypeptide is CD-NTase-associated protein 6 (Escherichia coli (strain KTE188)).